A 552-amino-acid chain; its full sequence is Urocanate hydratase (552 aa).

Residues 50-51, glutamine 128, 174-176, glutamate 194, arginine 199, 261-265, 271-272, and tyrosine 320 contribute to the NAD(+) site; these read GG, GMG, QTSAH, and YI. Cysteine 408 is an active-site residue. Residue glycine 490 coordinates NAD(+).

This sequence belongs to the urocanase family. NAD(+) serves as cofactor.

It is found in the cytoplasm. It carries out the reaction 4-imidazolone-5-propanoate = trans-urocanate + H2O. Its pathway is amino-acid degradation; L-histidine degradation into L-glutamate; N-formimidoyl-L-glutamate from L-histidine: step 2/3. In terms of biological role, catalyzes the conversion of urocanate to 4-imidazolone-5-propionate. In Bdellovibrio bacteriovorus (strain ATCC 15356 / DSM 50701 / NCIMB 9529 / HD100), this protein is Urocanate hydratase.